The following is a 394-amino-acid chain: Junctional adhesion molecule-like (394 aa).

Positions 1–19 are cleaved as a signal peptide; it reads MFCPLKLILLPVLLDYSLG. Ig-like V-type domains are found at residues 20–132 and 137–250; these read LNDL…KAVV and PEEP…IVLH. The Extracellular segment spans residues 20–275; it reads LNDLNVSPPE…RPLVLGGNQL (256 aa). 2 cysteine pairs are disulfide-bonded: Cys-42/Cys-116 and Cys-155/Cys-234. N-linked (GlcNAc...) asparagine glycans are attached at residues Asn-76 and Asn-231. A helical transmembrane segment spans residues 276 to 296; sequence VIIVGIVCATILLLPVLILIV. The Cytoplasmic segment spans residues 297–394; that stretch reads KKTCGNKSSV…GGMPKTQQAF (98 aa). The interval 369–394 is disordered; sequence PSLRSDRNNSLEKKSGGGMPKTQQAF. Basic and acidic residues predominate over residues 372–383; it reads RSDRNNSLEKKS.

This sequence belongs to the immunoglobulin superfamily. Homodimer; active form in leukocyte-endothelial cell adhesion. Interacts (homodimeric form) with CXADR. Interacts (via cytoplasmic domain) with the PI3 kinase; upon CXADR-binding. Interacts with ITGA4 and ITGB1; integrin alpha-4/beta-1 may regulate leukocyte to endothelial cells adhesion by controlling JAML homodimerization. In terms of tissue distribution, expression is restricted to the hematopoietic tissues with the exception of liver. Expressed in fetal liver, spleen and thymus. Preferentially expressed by mature leukocytes (at protein level).

It localises to the cell membrane. The protein localises to the cell junction. Its function is as follows. Transmembrane protein of the plasma membrane of leukocytes that control their migration and activation through interaction with CXADR, a plasma membrane receptor found on adjacent epithelial and endothelial cells. The interaction between both receptors mediates the activation of gamma-delta T-cells, a subpopulation of T-cells residing in epithelia and involved in tissue homeostasis and repair. Upon epithelial CXADR-binding, JAML induces downstream cell signaling events in gamma-delta T-cells through PI3-kinase and MAP kinases. It results in proliferation and production of cytokines and growth factors by T-cells that in turn stimulate epithelial tissues repair. It also controls the transmigration of leukocytes within epithelial and endothelial tissues through adhesive interactions with epithelial and endothelial CXADR. This Homo sapiens (Human) protein is Junctional adhesion molecule-like.